The chain runs to 194 residues: Putative NAD(P)H nitroreductase YfhC (194 aa).

FMN-binding positions include 20–22, 147–148, and Arg188; these read RRS and KI.

The protein belongs to the nitroreductase family. The cofactor is FMN.

The chain is Putative NAD(P)H nitroreductase YfhC (yfhC) from Bacillus subtilis (strain 168).